We begin with the raw amino-acid sequence, 449 residues long: UNC93-like protein MFSD11 (449 aa).

The helical transmembrane segment at 8–28 (LFNIIILGVAFMFMFTAFQTC) threads the bilayer. N-linked (GlcNAc...) asparagine glycosylation is present at N40. Transmembrane regions (helical) follow at residues 53–73 (AIIY…VAIV), 74–94 (GPQL…AVFI), 96–116 (PFPW…AVLW), 138–158 (IFWA…YFAW), and 170–190 (RTVF…FFLI). Residue S204 is modified to Phosphoserine. A run of 6 helical transmembrane segments spans residues 239–259 (MLLL…FSGV), 277–297 (LIGL…SLFG), 309–329 (PVVL…FLNM), 359–379 (FLLG…LGFL), 385–405 (APAF…AFFY), and 410–430 (LLHW…ISFF).

The protein belongs to the unc-93 family.

The protein resides in the membrane. The chain is UNC93-like protein MFSD11 (MFSD11) from Homo sapiens (Human).